Reading from the N-terminus, the 388-residue chain is Protein RecA (388 aa).

79 to 86 serves as a coordination point for ATP; that stretch reads GPESSGKT. A disordered region spans residues 347–372; the sequence is IDGEEVSEQDTENKKDEPKKEEAVNE. A compositionally biased stretch (basic and acidic residues) spans 357–369; the sequence is TENKKDEPKKEEA.

This sequence belongs to the RecA family.

The protein resides in the cytoplasm. Can catalyze the hydrolysis of ATP in the presence of single-stranded DNA, the ATP-dependent uptake of single-stranded DNA by duplex DNA, and the ATP-dependent hybridization of homologous single-stranded DNAs. It interacts with LexA causing its activation and leading to its autocatalytic cleavage. The sequence is that of Protein RecA from Streptococcus pneumoniae (strain CGSP14).